The primary structure comprises 904 residues: Protein translocase subunit SecA (904 aa).

ATP-binding positions include Gln89, 107–111 (GEGKT), and Asp496. The tract at residues 870–904 (GGFQELSSGTPSPTVTVTTSSGGGTERKTSRRRKR) is disordered. A compositionally biased stretch (low complexity) spans 876–889 (SSGTPSPTVTVTTS).

Belongs to the SecA family. As to quaternary structure, monomer and homodimer. Part of the essential Sec protein translocation apparatus which comprises SecA, SecYEG and auxiliary proteins SecDF. Other proteins may also be involved.

It localises to the cell inner membrane. It is found in the cytoplasm. The enzyme catalyses ATP + H2O + cellular proteinSide 1 = ADP + phosphate + cellular proteinSide 2.. Its function is as follows. Part of the Sec protein translocase complex. Interacts with the SecYEG preprotein conducting channel. Has a central role in coupling the hydrolysis of ATP to the transfer of proteins into and across the cell membrane, serving as an ATP-driven molecular motor driving the stepwise translocation of polypeptide chains across the membrane. This Leptospira borgpetersenii serovar Hardjo-bovis (strain JB197) protein is Protein translocase subunit SecA.